A 311-amino-acid polypeptide reads, in one-letter code: MTKIIFMGTPAFSATVLEGLLTDERYDIVAVVTQPDRAVGRKKEIRMTPVKELALAHELPIYQPEKLSGSEEMAQLISLGADGIVTAAYGQFLPSKLLDSMDFAVNVHASLLPKYRGGAPIHYAIINGDAEAGVTIMEMVKEMDAGDMVSQKALPILDQDNVGTMFEKLAVLGRDLLLETLPAYIAGEIKPVPQDASQVTFSPNISPEEERLDWNKSGRDIFNQIRGMYPWPVAHTLLNGKRFKIYEGDLVEGQGQAGHIIEKTKKSLVVATGQGAISLKSVQPEGKPRMAIADFLNGVGRNLEVGDVFGQ.

110 to 113 (SLLP) contacts (6S)-5,6,7,8-tetrahydrofolate.

The protein belongs to the Fmt family.

The enzyme catalyses L-methionyl-tRNA(fMet) + (6R)-10-formyltetrahydrofolate = N-formyl-L-methionyl-tRNA(fMet) + (6S)-5,6,7,8-tetrahydrofolate + H(+). In terms of biological role, attaches a formyl group to the free amino group of methionyl-tRNA(fMet). The formyl group appears to play a dual role in the initiator identity of N-formylmethionyl-tRNA by promoting its recognition by IF2 and preventing the misappropriation of this tRNA by the elongation apparatus. This is Methionyl-tRNA formyltransferase from Streptococcus thermophilus (strain ATCC BAA-250 / LMG 18311).